Here is a 132-residue protein sequence, read N- to C-terminus: Small ribosomal subunit protein uS8 (132 aa).

Belongs to the universal ribosomal protein uS8 family. In terms of assembly, part of the 30S ribosomal subunit. Contacts proteins S5 and S12.

Functionally, one of the primary rRNA binding proteins, it binds directly to 16S rRNA central domain where it helps coordinate assembly of the platform of the 30S subunit. This is Small ribosomal subunit protein uS8 from Ehrlichia ruminantium (strain Welgevonden).